Reading from the N-terminus, the 387-residue chain is BarH-like 2 homeobox protein (387 aa).

3 disordered regions span residues 1–145 (MTME…FLIK), 157–240 (CAPY…TAFS), and 367–387 (PGGQ…PHPR). Positions 7–24 (SGSSFGIDTILSSASSGS) are enriched in polar residues. Positions 100–113 (APTQSLQPLPQQQQ) are enriched in low complexity. Residues 114-126 (PLPPQQPPPPPPQ) show a composition bias toward pro residues. Residues 127 to 141 (QLGSAASAPRTSTSS) are compositionally biased toward low complexity. Polar residues predominate over residues 160 to 178 (YSTSVSSPHHTPKQESNAV). Residues 180-220 (ESFRPKLEQEDSKTKLDKREDSQSDIKCHGTKEEGDREITS) are compositionally biased toward basic and acidic residues. Residues 232 to 291 (PRKARTAFSDHQLNQLERSFERQKYLSVQDRMDLAAALNLTDTQVKTWYQNRRTKWKRQT) constitute a DNA-binding region (homeobox).

Belongs to the BAR homeobox family.

The protein localises to the nucleus. Its function is as follows. Potential regulator of neural basic helix-loop-helix genes. The sequence is that of BarH-like 2 homeobox protein (BARHL2) from Homo sapiens (Human).